The following is a 127-amino-acid chain: LIM domain-containing protein 2 (127 aa).

Position 1 is an N-acetylmethionine (Met1). The tract at residues 1–24 (MFQAAGAAQATPSHDAKGGGSSTV) is disordered. Residues 38 to 98 (ETCAACQKTV…KPHFQQLFKS (61 aa)) form the LIM zinc-binding domain. Residues Cys40, Cys43, His61, Cys64, Cys67, Cys70, Cys88, and His91 each coordinate Zn(2+).

As to quaternary structure, interacts with ILK.

It localises to the cytoplasm. The protein localises to the nucleus. Functionally, acts as an activator of the protein-kinase ILK, thereby regulating cell motility. The sequence is that of LIM domain-containing protein 2 from Homo sapiens (Human).